Reading from the N-terminus, the 452-residue chain is UDP-N-acetylmuramoylalanine--D-glutamate ligase (452 aa).

119–125 (GSNGKTT) is an ATP binding site.

It belongs to the MurCDEF family.

The protein localises to the cytoplasm. It carries out the reaction UDP-N-acetyl-alpha-D-muramoyl-L-alanine + D-glutamate + ATP = UDP-N-acetyl-alpha-D-muramoyl-L-alanyl-D-glutamate + ADP + phosphate + H(+). It functions in the pathway cell wall biogenesis; peptidoglycan biosynthesis. In terms of biological role, cell wall formation. Catalyzes the addition of glutamate to the nucleotide precursor UDP-N-acetylmuramoyl-L-alanine (UMA). In Streptococcus pyogenes serotype M2 (strain MGAS10270), this protein is UDP-N-acetylmuramoylalanine--D-glutamate ligase.